The following is a 61-amino-acid chain: Metallothionein-2 (61 aa).

Residue methionine 1 is modified to N-acetylmethionine. The tract at residues 1–29 is beta; that stretch reads MDPNCSCASDGSCSCAGACKCKQCKCTSC. A divalent metal cation is bound by residues cysteine 5, cysteine 7, cysteine 13, cysteine 15, cysteine 19, cysteine 21, cysteine 24, cysteine 26, cysteine 29, cysteine 33, cysteine 34, cysteine 36, cysteine 37, cysteine 41, cysteine 44, cysteine 48, cysteine 50, and cysteine 57. An alpha region spans residues 30–61; that stretch reads KKSCCSCCPVGCAKCSQGCICKEASDKCSCCA. Serine 58 bears the Phosphoserine mark. Cysteine 59 and cysteine 60 together coordinate a divalent metal cation.

It belongs to the metallothionein superfamily. Type 1 family.

Its function is as follows. Metallothioneins have a high content of cysteine residues that bind various heavy metals; these proteins are transcriptionally regulated by both heavy metals and glucocorticoids. In Mus musculus (Mouse), this protein is Metallothionein-2 (Mt2).